The sequence spans 647 residues: Chaperone protein HtpG (647 aa).

Residues 1–353 (MNAHVEQLEF…AQDMSLNVSR (353 aa)) are a; substrate-binding. The interval 354–567 (EILQQDRQIK…AFGMTPALAR (214 aa)) is b. Residues 568-647 (IYRASGQEVP…LLAERLARTL (80 aa)) are c.

This sequence belongs to the heat shock protein 90 family. In terms of assembly, homodimer.

Its subcellular location is the cytoplasm. Functionally, molecular chaperone. Has ATPase activity. The polypeptide is Chaperone protein HtpG (Mycobacterium bovis (strain ATCC BAA-935 / AF2122/97)).